Consider the following 396-residue polypeptide: Zinc metalloproteinase nas-24 (396 aa).

The first 20 residues, 1 to 20, serve as a signal peptide directing secretion; that stretch reads MTRVVHIIGAAFLLSSYAYC. The region spanning 44 to 230 is the Peptidase M12A domain; that stretch reads ERLGSKWLGG…YKINQYYGCG (187 aa). 2 N-linked (GlcNAc...) asparagine glycosylation sites follow: asparagine 63 and asparagine 79. 4 disulfide bridges follow: cysteine 82–cysteine 229, cysteine 105–cysteine 129, cysteine 231–cysteine 251, and cysteine 253–cysteine 262. A Zn(2+)-binding site is contributed by histidine 137. Glutamate 138 is a catalytic residue. Positions 141 and 147 each coordinate Zn(2+). In terms of domain architecture, EGF-like spans 224 to 263; it reads NQYYGCGCSTQLECKNGGYTSPSDCSRCNCPKGFFGKLCN. N-linked (GlcNAc...) asparagine glycosylation occurs at asparagine 310.

Requires Zn(2+) as cofactor.

Its subcellular location is the secreted. Functionally, metalloprotease. The protein is Zinc metalloproteinase nas-24 (nas-24) of Caenorhabditis elegans.